The primary structure comprises 122 residues: Large ribosomal subunit protein uL14 (122 aa).

Belongs to the universal ribosomal protein uL14 family. In terms of assembly, part of the 50S ribosomal subunit. Forms a cluster with proteins L3 and L19. In the 70S ribosome, L14 and L19 interact and together make contacts with the 16S rRNA in bridges B5 and B8.

Binds to 23S rRNA. Forms part of two intersubunit bridges in the 70S ribosome. The protein is Large ribosomal subunit protein uL14 of Alteromonas mediterranea (strain DSM 17117 / CIP 110805 / LMG 28347 / Deep ecotype).